A 153-amino-acid polypeptide reads, in one-letter code: Endoribonuclease YbeY (153 aa).

3 residues coordinate Zn(2+): histidine 118, histidine 122, and histidine 128.

Belongs to the endoribonuclease YbeY family. Requires Zn(2+) as cofactor.

Its subcellular location is the cytoplasm. Single strand-specific metallo-endoribonuclease involved in late-stage 70S ribosome quality control and in maturation of the 3' terminus of the 16S rRNA. This is Endoribonuclease YbeY from Pelagibacter ubique (strain HTCC1062).